The chain runs to 205 residues: Ribosomal RNA small subunit methyltransferase G (205 aa).

Residues glycine 76, leucine 81, 127 to 128 (IE), and arginine 140 contribute to the S-adenosyl-L-methionine site.

It belongs to the methyltransferase superfamily. RNA methyltransferase RsmG family.

It is found in the cytoplasm. It catalyses the reaction guanosine(527) in 16S rRNA + S-adenosyl-L-methionine = N(7)-methylguanosine(527) in 16S rRNA + S-adenosyl-L-homocysteine. Specifically methylates the N7 position of guanine in position 527 of 16S rRNA. This is Ribosomal RNA small subunit methyltransferase G from Francisella tularensis subsp. holarctica (strain FTNF002-00 / FTA).